The following is a 487-amino-acid chain: Serralysin (487 aa).

Residues 1–16 (MQSTKKAIEITESSLA) constitute a propeptide that is removed on maturation. Histidine 192 serves as a coordination point for Zn(2+). Residue glutamate 193 is part of the active site. Histidine 196, histidine 202, and tyrosine 232 together coordinate Zn(2+). Arginine 269, glycine 271, threonine 273, aspartate 301, glycine 303, glycine 304, aspartate 306, threonine 343, glutamate 345, glycine 350, glycine 352, aspartate 354, asparagine 359, alanine 361, asparagine 363, glycine 367, glycine 368, alanine 369, glycine 370, aspartate 372, glycine 376, glycine 377, glycine 378, glycine 379, aspartate 381, glycine 385, glycine 386, alanine 387, glycine 388, aspartate 390, aspartate 399, aspartate 406, and aspartate 416 together coordinate Ca(2+). Hemolysin-type calcium-binding repeat units lie at residues 348–365 (IGGSGNDVIVGNAANNVL) and 366–383 (KGGAGNDVLFGGGGADEL).

Belongs to the peptidase M10B family. It depends on Ca(2+) as a cofactor. Requires Zn(2+) as cofactor.

It localises to the secreted. It carries out the reaction Preferential cleavage of bonds with hydrophobic residues in P1'.. Has insecticidal activity against the locust M.palpalis. When administered orally to locusts at a low dose it causes them to lie on their sides exhibiting sporadic limb movements and muscular twitching, followed by full recovery. When administered at higher doses the same symptoms are observed, followed by death. The sequence is that of Serralysin from Serratia marcescens.